We begin with the raw amino-acid sequence, 156 residues long: RNA pyrophosphohydrolase (156 aa).

One can recognise a Nudix hydrolase domain in the interval 6–148; sequence NYRPNVAAIV…KKNIYVKVIK (143 aa). A Nudix box motif is present at residues 43-64; it reads GGIDKGESVKNALFRELKEEIG.

The protein belongs to the Nudix hydrolase family. RppH subfamily. It depends on a divalent metal cation as a cofactor.

Its function is as follows. Accelerates the degradation of transcripts by removing pyrophosphate from the 5'-end of triphosphorylated RNA, leading to a more labile monophosphorylated state that can stimulate subsequent ribonuclease cleavage. The polypeptide is RNA pyrophosphohydrolase (Campylobacter jejuni subsp. jejuni serotype O:6 (strain 81116 / NCTC 11828)).